The sequence spans 441 residues: Ribulose bisphosphate carboxylase large chain (441 aa).

Residues N89 and T139 each coordinate substrate. K141 acts as the Proton acceptor in catalysis. K143 is a substrate binding site. Positions 167, 169, and 170 each coordinate Mg(2+). An N6-carboxylysine modification is found at K167. H260 functions as the Proton acceptor in the catalytic mechanism. 3 residues coordinate substrate: R261, H293, and S345.

The protein belongs to the RuBisCO large chain family. Type I subfamily. As to quaternary structure, heterohexadecamer of 8 large chains and 8 small chains; disulfide-linked. The disulfide link is formed within the large subunit homodimers. The cofactor is Mg(2+). The disulfide bond which can form in the large chain dimeric partners within the hexadecamer appears to be associated with oxidative stress and protein turnover.

Its subcellular location is the plastid. The protein resides in the chloroplast. It carries out the reaction 2 (2R)-3-phosphoglycerate + 2 H(+) = D-ribulose 1,5-bisphosphate + CO2 + H2O. The enzyme catalyses D-ribulose 1,5-bisphosphate + O2 = 2-phosphoglycolate + (2R)-3-phosphoglycerate + 2 H(+). RuBisCO catalyzes two reactions: the carboxylation of D-ribulose 1,5-bisphosphate, the primary event in carbon dioxide fixation, as well as the oxidative fragmentation of the pentose substrate in the photorespiration process. Both reactions occur simultaneously and in competition at the same active site. The sequence is that of Ribulose bisphosphate carboxylase large chain from Fouquieria splendens (Ocotillo).